The following is a 207-amino-acid chain: GTP cyclohydrolase 1 (207 aa).

Residues Cys-88, His-91, and Cys-162 each coordinate Zn(2+).

The protein belongs to the GTP cyclohydrolase I family. As to quaternary structure, toroid-shaped homodecamer, composed of two pentamers of five dimers.

It carries out the reaction GTP + H2O = 7,8-dihydroneopterin 3'-triphosphate + formate + H(+). Its pathway is cofactor biosynthesis; 7,8-dihydroneopterin triphosphate biosynthesis; 7,8-dihydroneopterin triphosphate from GTP: step 1/1. The polypeptide is GTP cyclohydrolase 1 (Sulfurisphaera tokodaii (strain DSM 16993 / JCM 10545 / NBRC 100140 / 7) (Sulfolobus tokodaii)).